The primary structure comprises 826 residues: Ubiquitin carboxyl-terminal hydrolase 16 (826 aa).

Residues 1 to 23 (MGKKRTKGKSVPEKASSESTEPM) are disordered. The UBP-type zinc-finger motif lies at 22 to 141 (PMCRHLRKGL…QVVDYVRKQA (120 aa)). Residues Cys-24, His-26, Cys-48, Cys-51, Cys-73, Cys-76, Cys-81, His-89, His-93, His-102, Cys-115, and Cys-118 each coordinate Zn(2+). A Glycyl lysine isopeptide (Lys-Gly) (interchain with G-Cter in SUMO2) cross-link involves residue Lys-139. The interval 145–184 (TSKPAEKNNGHIELENKKLEKESKNEQEREKSESMAKENI) is disordered. Basic and acidic residues predominate over residues 148 to 180 (PAEKNNGHIELENKKLEKESKNEQEREKSESMA). Phosphoserine is present on Ser-188. Residues 195–825 (KGLSNLGNTC…QAYLLFYERI (631 aa)) form the USP domain. Cys-204 (nucleophile) is an active-site residue. Residues 392–407 (QSGKKNINDKNVKKTM) show a composition bias toward basic and acidic residues. Disordered stretches follow at residues 392–456 (QSGK…RRQQ) and 526–553 (ADERKCPEHPEVKSVSTESDLGSLTSAP). Residues 408–419 (EEEDKDSEEEKD) are compositionally biased toward acidic residues. Position 414 is a phosphoserine (Ser-414). Positions 436-456 (HTQKKAKKQAKKQAKNQRRQQ) are enriched in basic residues. The segment covering 526 to 537 (ADERKCPEHPEV) has biased composition (basic and acidic residues). Residues 539-551 (SVSTESDLGSLTS) are compositionally biased toward polar residues. His-760 serves as the catalytic Proton acceptor.

The protein belongs to the peptidase C19 family. USP16 subfamily. Homotetramer. Associates with late pre-40S ribosomes. Interacts with CEP78; promoting deubiquitination of tektins. Phosphorylated at the onset of mitosis and dephosphorylated during the metaphase/anaphase transition. Phosphorylation by AURKB enhances the deubiquitinase activity.

It localises to the nucleus. The enzyme catalyses Thiol-dependent hydrolysis of ester, thioester, amide, peptide and isopeptide bonds formed by the C-terminal Gly of ubiquitin (a 76-residue protein attached to proteins as an intracellular targeting signal).. In terms of biological role, specifically deubiquitinates 'Lys-120' of histone H2A (H2AK119Ub), a specific tag for epigenetic transcriptional repression, thereby acting as a coactivator. Deubiquitination of histone H2A is a prerequisite for subsequent phosphorylation at 'Ser-11' of histone H3 (H3S10ph), and is required for chromosome segregation when cells enter into mitosis. In resting B- and T-lymphocytes, phosphorylation by AURKB leads to enhance its activity, thereby maintaining transcription in resting lymphocytes. Regulates Hox gene expression via histone H2A deubiquitination. Prefers nucleosomal substrates. Does not deubiquitinate histone H2B. Also deubiquitinates non-histone proteins, such as ribosomal protein RPS27A: deubiquitination of monoubiquitinated RPS27A promotes maturation of the 40S ribosomal subunit. Also mediates deubiquitination of tektin proteins (TEKT1, TEKT2, TEK3, TEKT4 and TEKT5), promoting their stability. The sequence is that of Ubiquitin carboxyl-terminal hydrolase 16 (Usp16) from Rattus norvegicus (Rat).